Reading from the N-terminus, the 201-residue chain is FMN reductase (NADH) RutF (201 aa).

Residues A169–A201 are disordered.

This sequence belongs to the non-flavoprotein flavin reductase family. RutF subfamily.

It carries out the reaction FMNH2 + NAD(+) = FMN + NADH + 2 H(+). Catalyzes the reduction of FMN to FMNH2 which is used to reduce pyrimidine by RutA via the Rut pathway. This Methylorubrum extorquens (strain ATCC 14718 / DSM 1338 / JCM 2805 / NCIMB 9133 / AM1) (Methylobacterium extorquens) protein is FMN reductase (NADH) RutF.